The following is a 265-amino-acid chain: Large ribosomal subunit protein eL8 (265 aa).

Belongs to the eukaryotic ribosomal protein eL8 family. As to quaternary structure, interacts with cmd-1 in the presence of Ca(2+).

This Caenorhabditis elegans protein is Large ribosomal subunit protein eL8.